Reading from the N-terminus, the 125-residue chain is Large ribosomal subunit protein bL12 (125 aa).

The protein belongs to the bacterial ribosomal protein bL12 family. As to quaternary structure, homodimer. Part of the ribosomal stalk of the 50S ribosomal subunit. Forms a multimeric L10(L12)X complex, where L10 forms an elongated spine to which 2 to 4 L12 dimers bind in a sequential fashion. Binds GTP-bound translation factors.

Forms part of the ribosomal stalk which helps the ribosome interact with GTP-bound translation factors. Is thus essential for accurate translation. This Erythrobacter litoralis (strain HTCC2594) protein is Large ribosomal subunit protein bL12.